Here is a 364-residue protein sequence, read N- to C-terminus: Aminomethyltransferase (364 aa).

It belongs to the GcvT family. As to quaternary structure, the glycine cleavage system is composed of four proteins: P, T, L and H.

The enzyme catalyses N(6)-[(R)-S(8)-aminomethyldihydrolipoyl]-L-lysyl-[protein] + (6S)-5,6,7,8-tetrahydrofolate = N(6)-[(R)-dihydrolipoyl]-L-lysyl-[protein] + (6R)-5,10-methylene-5,6,7,8-tetrahydrofolate + NH4(+). Its function is as follows. The glycine cleavage system catalyzes the degradation of glycine. The sequence is that of Aminomethyltransferase from Enterobacter sp. (strain 638).